Here is a 485-residue protein sequence, read N- to C-terminus: GTPase Der (485 aa).

EngA-type G domains lie at 3-167 and 176-349; these read PTIA…PEPE and PVFA…NAAM. Residues 9-16, 56-60, 119-122, 182-189, 229-233, and 294-297 contribute to the GTP site; these read GRPNVGKS, DTGGF, NKGE, DTAGV, and NKWD. Positions 350-434 constitute a KH-like domain; sequence IKMPTPKITR…PLRIQYNVSE (85 aa). Residues 435-485 are disordered; sequence NPYENAEDKPKKKPLRRVSLSNRIEKREGRKEEKNRFKKKTKVSVKKQFSK. Over residues 457–469 the composition is skewed to basic and acidic residues; sequence RIEKREGRKEEKN. Over residues 470-485 the composition is skewed to basic residues; that stretch reads RFKKKTKVSVKKQFSK.

The protein belongs to the TRAFAC class TrmE-Era-EngA-EngB-Septin-like GTPase superfamily. EngA (Der) GTPase family. As to quaternary structure, associates with the 50S ribosomal subunit.

GTPase that plays an essential role in the late steps of ribosome biogenesis. In Neisseria meningitidis serogroup C / serotype 2a (strain ATCC 700532 / DSM 15464 / FAM18), this protein is GTPase Der.